Reading from the N-terminus, the 199-residue chain is Protein OPI10 homolog (199 aa).

This sequence belongs to the OPI10 family.

This Aedes aegypti (Yellowfever mosquito) protein is Protein OPI10 homolog.